A 382-amino-acid polypeptide reads, in one-letter code: Galactokinase (382 aa).

34-37 contributes to the substrate binding site; it reads EHTD. Residue 124–130 coordinates ATP; the sequence is GAGLSSS. The Mg(2+) site is built by S130 and E162. D174 (proton acceptor) is an active-site residue. Residue Y223 participates in substrate binding.

Belongs to the GHMP kinase family. GalK subfamily.

Its subcellular location is the cytoplasm. The enzyme catalyses alpha-D-galactose + ATP = alpha-D-galactose 1-phosphate + ADP + H(+). Its pathway is carbohydrate metabolism; galactose metabolism. In terms of biological role, catalyzes the transfer of the gamma-phosphate of ATP to D-galactose to form alpha-D-galactose-1-phosphate (Gal-1-P). In Salmonella heidelberg (strain SL476), this protein is Galactokinase.